A 365-amino-acid chain; its full sequence is Alanine racemase (365 aa).

The active-site Proton acceptor; specific for D-alanine is the Lys32. Position 32 is an N6-(pyridoxal phosphate)lysine (Lys32). A substrate-binding site is contributed by Arg128. Tyr257 functions as the Proton acceptor; specific for L-alanine in the catalytic mechanism. Position 305 (Met305) interacts with substrate.

The protein belongs to the alanine racemase family. The cofactor is pyridoxal 5'-phosphate.

The catalysed reaction is L-alanine = D-alanine. Its pathway is amino-acid biosynthesis; D-alanine biosynthesis; D-alanine from L-alanine: step 1/1. In terms of biological role, catalyzes the interconversion of L-alanine and D-alanine. May also act on other amino acids. This Francisella tularensis subsp. holarctica (strain FTNF002-00 / FTA) protein is Alanine racemase (alr).